Reading from the N-terminus, the 235-residue chain is Orotidine 5'-phosphate decarboxylase (235 aa).

Substrate is bound by residues D17, K39, 66–75 (DLKLHDIGNT), T121, R182, Q191, G211, and R212. K68 (proton donor) is an active-site residue.

The protein belongs to the OMP decarboxylase family. Type 1 subfamily. In terms of assembly, homodimer.

It catalyses the reaction orotidine 5'-phosphate + H(+) = UMP + CO2. Its pathway is pyrimidine metabolism; UMP biosynthesis via de novo pathway; UMP from orotate: step 2/2. Functionally, catalyzes the decarboxylation of orotidine 5'-monophosphate (OMP) to uridine 5'-monophosphate (UMP). The polypeptide is Orotidine 5'-phosphate decarboxylase (Rhodopseudomonas palustris (strain HaA2)).